We begin with the raw amino-acid sequence, 291 residues long: Ribosomal large subunit pseudouridine synthase B (291 aa).

The region spanning 3-75 is the S4 RNA-binding domain; that stretch reads EKLQKVLARA…ICRVLAYYKP (73 aa). D110 (nucleophile) is an active-site residue. The tract at residues 256–291 is disordered; sequence VEKDRRRMKANQIRRAVKRHSQVSGGRRSGGRNNNG.

It belongs to the pseudouridine synthase RsuA family.

The catalysed reaction is uridine(2605) in 23S rRNA = pseudouridine(2605) in 23S rRNA. Functionally, responsible for synthesis of pseudouridine from uracil-2605 in 23S ribosomal RNA. This is Ribosomal large subunit pseudouridine synthase B (rluB) from Escherichia coli O6:H1 (strain CFT073 / ATCC 700928 / UPEC).